The following is a 439-amino-acid chain: Lipoyl synthase, mitochondrial (439 aa).

Residues M1–Y37 constitute a mitochondrion transit peptide. [4Fe-4S] cluster-binding residues include C150, C155, C161, C181, C185, C188, and S396. One can recognise a Radical SAM core domain in the interval G164 to L385.

Belongs to the radical SAM superfamily. Lipoyl synthase family. Requires [4Fe-4S] cluster as cofactor.

The protein localises to the mitochondrion. The catalysed reaction is [[Fe-S] cluster scaffold protein carrying a second [4Fe-4S](2+) cluster] + N(6)-octanoyl-L-lysyl-[protein] + 2 oxidized [2Fe-2S]-[ferredoxin] + 2 S-adenosyl-L-methionine + 4 H(+) = [[Fe-S] cluster scaffold protein] + N(6)-[(R)-dihydrolipoyl]-L-lysyl-[protein] + 4 Fe(3+) + 2 hydrogen sulfide + 2 5'-deoxyadenosine + 2 L-methionine + 2 reduced [2Fe-2S]-[ferredoxin]. It functions in the pathway protein modification; protein lipoylation via endogenous pathway; protein N(6)-(lipoyl)lysine from octanoyl-[acyl-carrier-protein]: step 2/2. Functionally, catalyzes the radical-mediated insertion of two sulfur atoms into the C-6 and C-8 positions of the octanoyl moiety bound to the lipoyl domains of lipoate-dependent enzymes, thereby converting the octanoylated domains into lipoylated derivatives. The sequence is that of Lipoyl synthase, mitochondrial from Paracoccidioides lutzii (strain ATCC MYA-826 / Pb01) (Paracoccidioides brasiliensis).